The sequence spans 74 residues: Large ribosomal subunit protein bL31 (74 aa).

Residues Cys17, Cys19, Cys38, and Cys41 each contribute to the Zn(2+) site.

The protein belongs to the bacterial ribosomal protein bL31 family. Type A subfamily. Part of the 50S ribosomal subunit. Zn(2+) is required as a cofactor.

Its function is as follows. Binds the 23S rRNA. The sequence is that of Large ribosomal subunit protein bL31 from Gloeobacter violaceus (strain ATCC 29082 / PCC 7421).